Reading from the N-terminus, the 385-residue chain is GTPase Obg (385 aa).

Residues 1–159 (MHFIDQAEIE…RRLRLELKLI (159 aa)) enclose the Obg domain. The OBG-type G domain occupies 160–328 (AEVGIVGMPN…LLQRVWQCLG (169 aa)). Residues 166 to 173 (GMPNAGKS), 191 to 195 (FTTLQ), 213 to 216 (DIPG), 280 to 283 (NKID), and 309 to 311 (SAV) each bind GTP. Mg(2+) is bound by residues Ser-173 and Thr-193.

It belongs to the TRAFAC class OBG-HflX-like GTPase superfamily. OBG GTPase family. Monomer. The cofactor is Mg(2+).

It localises to the cytoplasm. Its function is as follows. An essential GTPase which binds GTP, GDP and possibly (p)ppGpp with moderate affinity, with high nucleotide exchange rates and a fairly low GTP hydrolysis rate. Plays a role in control of the cell cycle, stress response, ribosome biogenesis and in those bacteria that undergo differentiation, in morphogenesis control. The protein is GTPase Obg of Synechococcus sp. (strain JA-3-3Ab) (Cyanobacteria bacterium Yellowstone A-Prime).